Reading from the N-terminus, the 769-residue chain is Serine protease HtrA-like (769 aa).

Residues 1–20 (MDIGKKHVIPKSQYRRKRRE) show a composition bias toward basic residues. Positions 1 to 390 (MDIGKKHVIP…ATSKLNKGRA (390 aa)) are disordered. Composition is skewed to basic and acidic residues over residues 21-64 (FFHN…ERFK) and 71-108 (LEQR…DVSK). Positions 126 to 137 (YEQNSEATLSTK) are enriched in polar residues. Residues 138-186 (STDKVESTEMRKLSSDKNKVGHEEQHVLSKPSEHDKETRIDSESSRTDS) are compositionally biased toward basic and acidic residues. The span at 247–262 (QQSQNEQTKTYTYGDS) shows a compositional bias: polar residues. Basic and acidic residues-rich tracts occupy residues 264–296 (QNDK…HIVD) and 310–330 (KTDD…HKQN). Polar residues predominate over residues 331 to 347 (ADSSETVGYQSQSTASH). Residues 348 to 364 (RSTEKRNISINDHDKLN) are compositionally biased toward basic and acidic residues. Residues 365–390 (GQKTNTKTSANNNQKKATSKLNKGRA) are compositionally biased toward polar residues. A helical membrane pass occupies residues 410 to 430 (LVILMGIIILIVILNAIFNNV). Active-site charge relay system residues include His-504, Asp-534, and Ser-619. Residues 680-733 (IVSLNSFERQAVKLPGKVKNGVVVDQVDNNGLADQSGLKKGDVITELDGKLLED) enclose the PDZ domain.

The protein belongs to the peptidase S1C family.

The protein localises to the cell membrane. The polypeptide is Serine protease HtrA-like (Staphylococcus aureus (strain NCTC 8325 / PS 47)).